Here is a 387-residue protein sequence, read N- to C-terminus: Solute carrier family 25 protein Shawn (387 aa).

Solcar repeat units follow at residues 37–156 (IRPL…FKAR), 179–263 (IPFL…LKSS), and 269–366 (PTFS…GKSF). The next 6 helical transmembrane spans lie at 43 to 63 (VASA…LDVI), 128 to 148 (LWSG…IYFV), 179 to 199 (IPFL…VTCV), 235 to 255 (LWRG…IYWT), 275 to 295 (FAAG…FDVV), and 337 to 357 (AIFS…AIMI).

It belongs to the mitochondrial carrier (TC 2.A.29) family.

The protein localises to the mitochondrion inner membrane. Its function is as follows. Mitochondrial transporter required for glutathione import into mitochondria. This is Solute carrier family 25 protein Shawn from Drosophila melanogaster (Fruit fly).